Reading from the N-terminus, the 334-residue chain is Glutaminase (334 aa).

Substrate is bound by residues Ser-76, Asn-126, Glu-170, Asn-177, Tyr-201, Tyr-253, and Val-271.

Belongs to the glutaminase family. In terms of assembly, homotetramer.

It catalyses the reaction L-glutamine + H2O = L-glutamate + NH4(+). The chain is Glutaminase from Trichormus variabilis (strain ATCC 29413 / PCC 7937) (Anabaena variabilis).